We begin with the raw amino-acid sequence, 244 residues long: Transcriptional activator protein Anr (244 aa).

An a nucleoside 3',5'-cyclic phosphate-binding site is contributed by Ala21–Asp149. Residues Lys159–Ile232 enclose the HTH crp-type domain. A DNA-binding region (H-T-H motif) is located at residues Arg192 to Thr211.

Transcriptional activator of anaerobic gene expression. Regulates the expression of the components of the hydrogen cyanide synthase (HcnABC) in a positive manner. May also act as an iron sensor. This is Transcriptional activator protein Anr from Pseudomonas protegens (strain DSM 19095 / LMG 27888 / CFBP 6595 / CHA0).